The following is a 141-amino-acid chain: MAPRDKRLSSTPLEILFFLNGWYYATYFLLELLIFLYKGLLLPYPTANLVLDVVMLLLYLGIEVIRLFFGTKGNLCQRKMPLGISVALTFPSAMMASYYLLLQTYVLRLEAIMNSILLFFCGSELLLEMLTLATFSSMDRI.

4 consecutive transmembrane segments (helical) span residues 15-35 (ILFF…LLIF), 49-69 (LVLD…RLFF), 82-102 (LGIS…YLLL), and 115-135 (SILL…LATF).

Part of the tectonic-like complex (also named B9 complex). Interacts with TMEM107.

The protein localises to the membrane. It is found in the cytoplasm. The protein resides in the cytoskeleton. It localises to the cilium basal body. Its function is as follows. Part of the tectonic-like complex which is required for tissue-specific ciliogenesis and may regulate ciliary membrane composition. The polypeptide is Transmembrane protein 216 (Tmem216) (Rattus norvegicus (Rat)).